The chain runs to 86 residues: Small ribosomal subunit protein bS16 (86 aa).

The protein belongs to the bacterial ribosomal protein bS16 family.

This chain is Small ribosomal subunit protein bS16, found in Bordetella bronchiseptica (strain ATCC BAA-588 / NCTC 13252 / RB50) (Alcaligenes bronchisepticus).